The sequence spans 729 residues: Catalase-peroxidase (729 aa).

The tryptophyl-tyrosyl-methioninium (Trp-Tyr) (with M-244) cross-link spans 95 to 218 (WHSAGTYRGA…LAAVEMGLVY (124 aa)). H96 acts as the Proton acceptor in catalysis. The segment at residues 218–244 (YVNPEGPHGHPDPVASGPDVRDTFARM) is a cross-link (tryptophyl-tyrosyl-methioninium (Tyr-Met) (with W-95)). H259 contacts heme b.

It belongs to the peroxidase family. Peroxidase/catalase subfamily. In terms of assembly, homodimer or homotetramer. It depends on heme b as a cofactor. Formation of the three residue Trp-Tyr-Met cross-link is important for the catalase, but not the peroxidase activity of the enzyme.

It catalyses the reaction H2O2 + AH2 = A + 2 H2O. It carries out the reaction 2 H2O2 = O2 + 2 H2O. In terms of biological role, bifunctional enzyme with both catalase and broad-spectrum peroxidase activity. The protein is Catalase-peroxidase of Synechococcus sp. (strain CC9605).